A 427-amino-acid polypeptide reads, in one-letter code: GTPase Obg (427 aa).

The Obg domain occupies 1–158 (MFIDKAKIHL…LTVTLELKLI (158 aa)). An OBG-type G domain is found at 159-330 (ADVGLVGFPN…LLDYVSIKLK (172 aa)). Residues 165–172 (GFPNVGKS), 190–194 (FTTLT), 212–215 (DIPG), 282–285 (NKTD), and 311–313 (SAA) each bind GTP. Mg(2+) is bound by residues Ser-172 and Thr-192. Residues 347 to 427 (LYELKEKDTN…IYDVEFEYFH (81 aa)) enclose the OCT domain.

Belongs to the TRAFAC class OBG-HflX-like GTPase superfamily. OBG GTPase family. In terms of assembly, monomer. Requires Mg(2+) as cofactor.

The protein localises to the cytoplasm. In terms of biological role, an essential GTPase which binds GTP, GDP and possibly (p)ppGpp with moderate affinity, with high nucleotide exchange rates and a fairly low GTP hydrolysis rate. Plays a role in control of the cell cycle, stress response, ribosome biogenesis and in those bacteria that undergo differentiation, in morphogenesis control. The protein is GTPase Obg of Alkaliphilus metalliredigens (strain QYMF).